An 89-amino-acid polypeptide reads, in one-letter code: HssA/B-like protein 21 (89 aa).

Belongs to the hssA/B family.

This chain is HssA/B-like protein 21 (hssl21), found in Dictyostelium discoideum (Social amoeba).